The sequence spans 521 residues: 56 kDa type-specific antigen (521 aa).

The N-terminal stretch at 1-22 is a signal peptide; that stretch reads MRKIMLIASAMSALSLPFSANA. Residues 64-86 traverse the membrane as a helical segment; it reads LPLIKGMPFGVTLAAGMTITPGV. The disordered stretch occupies residues 386 to 415; it reads LGVDQGQEGGCSKDKKQSDTTAEESKKEGK. Basic and acidic residues predominate over residues 396 to 415; that stretch reads CSKDKKQSDTTAEESKKEGK. A helical transmembrane segment spans residues 469-484; it reads TGMVGSLALGVAANVA.

The protein localises to the cell membrane. In terms of biological role, may be an adherent factor for rickettsial adsorption to the host-cell surface and a determinant of virulence of individual rickettsial strain. It is the major outer membrane protein. The sequence is that of 56 kDa type-specific antigen from Orientia tsutsugamushi (Rickettsia tsutsugamushi).